We begin with the raw amino-acid sequence, 267 residues long: Transcription factor LBX1 (267 aa).

The segment covering methionine 1–alanine 21 has biased composition (basic and acidic residues). Residues methionine 1 to threonine 36 are disordered. Positions arginine 127 to leucine 186 form a DNA-binding region, homeobox. The interval serine 211 to aspartate 267 is disordered. Positions proline 228 to methionine 237 are enriched in polar residues. The span at serine 255–aspartate 267 shows a compositional bias: acidic residues.

In terms of tissue distribution, expressed in all myoblasts that will populate body wall muscles as well as in a group of cells the migrate into the head.

Its subcellular location is the nucleus. Transcription factor that controls hypaxial muscle development by down-regulating myod1 and cdkn1b/p27, thereby allowing myoblasts to proliferate before the onset of terminal differentiation. The sequence is that of Transcription factor LBX1 from Xenopus laevis (African clawed frog).